Here is a 309-residue protein sequence, read N- to C-terminus: Protein FdhE (309 aa).

Belongs to the FdhE family.

It localises to the cytoplasm. Its function is as follows. Necessary for formate dehydrogenase activity. The polypeptide is Protein FdhE (Salmonella choleraesuis (strain SC-B67)).